A 256-amino-acid polypeptide reads, in one-letter code: tRNA (guanine-N(7)-)-methyltransferase (256 aa).

The segment at 17 to 45 (TCETVPGLPQKKHYRQRAHSNPHSDHDIE) is disordered. A compositionally biased stretch (basic residues) spans 26–36 (QKKHYRQRAHS). S-adenosyl-L-methionine-binding positions include Gly-74, 97-98 (EI), 132-133 (NA), and Leu-152. Residue Asp-155 is part of the active site. 230–232 (TEE) provides a ligand contact to S-adenosyl-L-methionine.

This sequence belongs to the class I-like SAM-binding methyltransferase superfamily. TrmB family.

It is found in the nucleus. The enzyme catalyses guanosine(46) in tRNA + S-adenosyl-L-methionine = N(7)-methylguanosine(46) in tRNA + S-adenosyl-L-homocysteine. Its pathway is tRNA modification; N(7)-methylguanine-tRNA biosynthesis. In terms of biological role, catalyzes the formation of N(7)-methylguanine at position 46 (m7G46) in tRNA. In Caenorhabditis elegans, this protein is tRNA (guanine-N(7)-)-methyltransferase.